Reading from the N-terminus, the 417-residue chain is Serine hydroxymethyltransferase (417 aa).

(6S)-5,6,7,8-tetrahydrofolate contacts are provided by residues Leu-121 and 125 to 127 (GHL). Position 229 is an N6-(pyridoxal phosphate)lysine (Lys-229). Residue 355-357 (SPF) participates in (6S)-5,6,7,8-tetrahydrofolate binding.

The protein belongs to the SHMT family. Homodimer. It depends on pyridoxal 5'-phosphate as a cofactor.

Its subcellular location is the cytoplasm. The enzyme catalyses (6R)-5,10-methylene-5,6,7,8-tetrahydrofolate + glycine + H2O = (6S)-5,6,7,8-tetrahydrofolate + L-serine. Its pathway is one-carbon metabolism; tetrahydrofolate interconversion. The protein operates within amino-acid biosynthesis; glycine biosynthesis; glycine from L-serine: step 1/1. In terms of biological role, catalyzes the reversible interconversion of serine and glycine with tetrahydrofolate (THF) serving as the one-carbon carrier. This reaction serves as the major source of one-carbon groups required for the biosynthesis of purines, thymidylate, methionine, and other important biomolecules. Also exhibits THF-independent aldolase activity toward beta-hydroxyamino acids, producing glycine and aldehydes, via a retro-aldol mechanism. This chain is Serine hydroxymethyltransferase, found in Salmonella choleraesuis (strain SC-B67).